We begin with the raw amino-acid sequence, 156 residues long: 6,7-dimethyl-8-ribityllumazine synthase (156 aa).

5-amino-6-(D-ribitylamino)uracil is bound by residues F23, 57 to 59 (AFE), and 81 to 83 (AVI). 86 to 87 (ST) is a binding site for (2S)-2-hydroxy-3-oxobutyl phosphate. Residue H89 is the Proton donor of the active site. Residue F114 participates in 5-amino-6-(D-ribitylamino)uracil binding. R128 provides a ligand contact to (2S)-2-hydroxy-3-oxobutyl phosphate.

The protein belongs to the DMRL synthase family.

The catalysed reaction is (2S)-2-hydroxy-3-oxobutyl phosphate + 5-amino-6-(D-ribitylamino)uracil = 6,7-dimethyl-8-(1-D-ribityl)lumazine + phosphate + 2 H2O + H(+). The protein operates within cofactor biosynthesis; riboflavin biosynthesis; riboflavin from 2-hydroxy-3-oxobutyl phosphate and 5-amino-6-(D-ribitylamino)uracil: step 1/2. Catalyzes the formation of 6,7-dimethyl-8-ribityllumazine by condensation of 5-amino-6-(D-ribitylamino)uracil with 3,4-dihydroxy-2-butanone 4-phosphate. This is the penultimate step in the biosynthesis of riboflavin. The polypeptide is 6,7-dimethyl-8-ribityllumazine synthase (Campylobacter lari (strain RM2100 / D67 / ATCC BAA-1060)).